The following is a 793-amino-acid chain: Pleckstrin homology domain-containing family H member 3 (793 aa).

The N-terminal stretch at 1 to 18 is a signal peptide; sequence MPLPGGLWWLLCCRRGFT. Residues 28 to 62 are disordered; sequence ELSGDGDEDEDEETFELRTPSPAGGGRGPLEVTLT. Residues 29–41 are compositionally biased toward acidic residues; it reads LSGDGDEDEDEET. At S30 the chain carries Phosphoserine. The 105-residue stretch at 95–199 folds into the PH domain; sequence DIVVKGWLYR…WGVALREVIA (105 aa). Residues 237–399 enclose the MyTH4 domain; the sequence is HTSGALYAPL…PSLAEISALS (163 aa). The FERM domain occupies 404-754; that stretch reads LLCTVHCPGA…AYLANPSPER (351 aa). 2 disordered regions span residues 554 to 586 and 598 to 622; these read VPLP…SAAL and KRRA…EGGG. Over residues 598–608 the composition is skewed to basic residues; sequence KRRAERARRGG. R638 and R642 each carry omega-N-methylarginine. Over residues 750-762 the composition is skewed to low complexity; that stretch reads PSPERPCSSSSPP. Residues 750-793 form a disordered region; it reads PSPERPCSSSSPPCQDLPDTSPPSQRPGLDEPQGQSGCLGQLQD. The segment covering 782–793 has biased composition (polar residues); that stretch reads QGQSGCLGQLQD.

This is Pleckstrin homology domain-containing family H member 3 (PLEKHH3) from Homo sapiens (Human).